Here is a 96-residue protein sequence, read N- to C-terminus: Glutamyl-tRNA(Gln) amidotransferase subunit C (96 aa).

It belongs to the GatC family. Heterotrimer of A, B and C subunits.

It catalyses the reaction L-glutamyl-tRNA(Gln) + L-glutamine + ATP + H2O = L-glutaminyl-tRNA(Gln) + L-glutamate + ADP + phosphate + H(+). The enzyme catalyses L-aspartyl-tRNA(Asn) + L-glutamine + ATP + H2O = L-asparaginyl-tRNA(Asn) + L-glutamate + ADP + phosphate + 2 H(+). In terms of biological role, allows the formation of correctly charged Asn-tRNA(Asn) or Gln-tRNA(Gln) through the transamidation of misacylated Asp-tRNA(Asn) or Glu-tRNA(Gln) in organisms which lack either or both of asparaginyl-tRNA or glutaminyl-tRNA synthetases. The reaction takes place in the presence of glutamine and ATP through an activated phospho-Asp-tRNA(Asn) or phospho-Glu-tRNA(Gln). The protein is Glutamyl-tRNA(Gln) amidotransferase subunit C of Pseudomonas aeruginosa (strain ATCC 15692 / DSM 22644 / CIP 104116 / JCM 14847 / LMG 12228 / 1C / PRS 101 / PAO1).